The chain runs to 102 residues: MICOS complex subunit MIC12 (102 aa).

Residues 4–26 (VLKLTSVTLAASSLAAAGYFYAF) form a helical membrane-spanning segment.

This sequence belongs to the MICOS complex subunit Mic12 family. As to quaternary structure, component of the mitochondrial contact site and cristae organizing system (MICOS) complex.

The protein localises to the mitochondrion inner membrane. In terms of biological role, component of the MICOS complex, a large protein complex of the mitochondrial inner membrane that plays crucial roles in the maintenance of crista junctions, inner membrane architecture, and formation of contact sites to the outer membrane. The sequence is that of MICOS complex subunit MIC12 (AIM5) from Lachancea thermotolerans (strain ATCC 56472 / CBS 6340 / NRRL Y-8284) (Yeast).